We begin with the raw amino-acid sequence, 472 residues long: Tryptophanase (472 aa).

Lys270 bears the N6-(pyridoxal phosphate)lysine mark.

This sequence belongs to the beta-eliminating lyase family. As to quaternary structure, homotetramer. Requires pyridoxal 5'-phosphate as cofactor.

The enzyme catalyses L-tryptophan + H2O = indole + pyruvate + NH4(+). It participates in amino-acid degradation; L-tryptophan degradation via pyruvate pathway; indole and pyruvate from L-tryptophan: step 1/1. The chain is Tryptophanase from Haemophilus influenzae (strain 86-028NP).